Reading from the N-terminus, the 132-residue chain is MSSQPNKNLKVFDNPNIERNFIIQINMPEFTCLCPKTGQPDFATLYLEYIADKVCIELKSLKMYIWSYRSKGEFHEAVTNKILDDLIQISNPRFMRLKAIFNVRGGIYTTIIAEYQQKNWTFKTKIDLQYQG.

The active-site Thioimide intermediate is Cys-34. Asp-41 functions as the Proton donor in the catalytic mechanism. Residues 56-58 and 75-76 contribute to the substrate site; these read IEL and HE.

It belongs to the GTP cyclohydrolase I family. QueF type 1 subfamily.

It localises to the cytoplasm. The enzyme catalyses 7-aminomethyl-7-carbaguanine + 2 NADP(+) = 7-cyano-7-deazaguanine + 2 NADPH + 3 H(+). It participates in tRNA modification; tRNA-queuosine biosynthesis. Functionally, catalyzes the NADPH-dependent reduction of 7-cyano-7-deazaguanine (preQ0) to 7-aminomethyl-7-deazaguanine (preQ1). The chain is NADPH-dependent 7-cyano-7-deazaguanine reductase from Vesicomyosocius okutanii subsp. Calyptogena okutanii (strain HA).